A 121-amino-acid chain; its full sequence is Large ribosomal subunit protein uL22 (121 aa).

It belongs to the universal ribosomal protein uL22 family. As to quaternary structure, part of the 50S ribosomal subunit.

This protein binds specifically to 23S rRNA; its binding is stimulated by other ribosomal proteins, e.g. L4, L17, and L20. It is important during the early stages of 50S assembly. It makes multiple contacts with different domains of the 23S rRNA in the assembled 50S subunit and ribosome. Functionally, the globular domain of the protein is located near the polypeptide exit tunnel on the outside of the subunit, while an extended beta-hairpin is found that lines the wall of the exit tunnel in the center of the 70S ribosome. The protein is Large ribosomal subunit protein uL22 of Synechocystis sp. (strain ATCC 27184 / PCC 6803 / Kazusa).